A 173-amino-acid chain; its full sequence is Photosystem I assembly protein Ycf3 (173 aa).

TPR repeat units lie at residues 35–68 (AFVYYRDGMSAQADGEYAEALDNYEEALRLEENP), 72–105 (SYILYNMALIHASNGDHEKALGLYQEAIELNPKM), and 120–153 (GEKAKEAGQEDDAENLFDKAAEYWKQAIRLAPNN).

Belongs to the Ycf3 family.

Its subcellular location is the cellular thylakoid membrane. Functionally, essential for the assembly of the photosystem I (PSI) complex. May act as a chaperone-like factor to guide the assembly of the PSI subunits. The polypeptide is Photosystem I assembly protein Ycf3 (Synechocystis sp. (strain ATCC 27184 / PCC 6803 / Kazusa)).